Consider the following 22-residue polypeptide: Leptoglycin (22 aa).

The disordered stretch occupies residues 1 to 22 (GLLGGLLGPLLGGGGGGGGGLL).

In terms of tissue distribution, expressed by the skin glands.

The protein resides in the secreted. Functionally, antimicrobial protein. Has antibacterial activity against the Gram-negative bacteria E.coli ATCC 28922 (MIC=50 uM), P.aeruginosa ATCC 9027 (MIC=8 uM) and C.freundii ATCC 8090 (MIC=75 uM). Does not have hemolytic activity. This chain is Leptoglycin, found in Leptodactylus pentadactylus (Smokey jungle frog).